The chain runs to 344 residues: N-acetyl-gamma-glutamyl-phosphate reductase (344 aa).

Cys149 is a catalytic residue.

Belongs to the NAGSA dehydrogenase family. Type 1 subfamily.

It is found in the cytoplasm. The enzyme catalyses N-acetyl-L-glutamate 5-semialdehyde + phosphate + NADP(+) = N-acetyl-L-glutamyl 5-phosphate + NADPH + H(+). The protein operates within amino-acid biosynthesis; L-arginine biosynthesis; N(2)-acetyl-L-ornithine from L-glutamate: step 3/4. In terms of biological role, catalyzes the NADPH-dependent reduction of N-acetyl-5-glutamyl phosphate to yield N-acetyl-L-glutamate 5-semialdehyde. The sequence is that of N-acetyl-gamma-glutamyl-phosphate reductase from Acidithiobacillus ferrooxidans (strain ATCC 23270 / DSM 14882 / CIP 104768 / NCIMB 8455) (Ferrobacillus ferrooxidans (strain ATCC 23270)).